Here is a 327-residue protein sequence, read N- to C-terminus: DNA-directed RNA polymerase subunit alpha (327 aa).

The tract at residues 1–233 is alpha N-terminal domain (alpha-NTD); that stretch reads MVREKVKVST…NLFIPFLHVE (233 aa). The tract at residues 267 to 327 is alpha C-terminal domain (alpha-CTD); that stretch reads LAFQYIFIDQ…KKILDILEKK (61 aa).

It belongs to the RNA polymerase alpha chain family. In terms of assembly, in plastids the minimal PEP RNA polymerase catalytic core is composed of four subunits: alpha, beta, beta', and beta''. When a (nuclear-encoded) sigma factor is associated with the core the holoenzyme is formed, which can initiate transcription.

Its subcellular location is the plastid. The protein resides in the chloroplast. It catalyses the reaction RNA(n) + a ribonucleoside 5'-triphosphate = RNA(n+1) + diphosphate. In terms of biological role, DNA-dependent RNA polymerase catalyzes the transcription of DNA into RNA using the four ribonucleoside triphosphates as substrates. This is DNA-directed RNA polymerase subunit alpha from Lepidium virginicum (Virginia pepperweed).